Here is a 286-residue protein sequence, read N- to C-terminus: ATP synthase gamma chain (286 aa).

Belongs to the ATPase gamma chain family. In terms of assembly, F-type ATPases have 2 components, CF(1) - the catalytic core - and CF(0) - the membrane proton channel. CF(1) has five subunits: alpha(3), beta(3), gamma(1), delta(1), epsilon(1). CF(0) has three main subunits: a, b and c.

Its subcellular location is the cell inner membrane. Functionally, produces ATP from ADP in the presence of a proton gradient across the membrane. The gamma chain is believed to be important in regulating ATPase activity and the flow of protons through the CF(0) complex. This Pseudomonas savastanoi pv. phaseolicola (strain 1448A / Race 6) (Pseudomonas syringae pv. phaseolicola (strain 1448A / Race 6)) protein is ATP synthase gamma chain.